The primary structure comprises 523 residues: WD repeat-containing protein WDS homolog (523 aa).

One can recognise a LisH domain in the interval 16-48 (KKHEFIRILVQCLYSLGFKNSASCLEFESKILY). Residues 49–107 (KTADSEFLEKQVLSGNWDSCVQVLDRIFDNSMDDTRNTALYLVFKQCLLEYLKRGDVSL) enclose the CTLH domain. WD repeat units lie at residues 222 to 261 (AHKNEVWFVQFSNSGKYLATASSDCTAIIWKVLDDNKVEL), 267 to 306 (SHQNPVSFVSWSPDDTKLLTCGNAEVLKLWDVDTGVLRHT), 310 to 353 (NNTG…KAWR), 355 to 394 (TRIPKVVDLAVTPDGESMITVFSDKEIRILNLETKVERVI), 395 to 434 (SEEQPITSLSISGDGKFFIVNLSCQEIHLWDLAGEWKQPL), 438 to 480 (GHRQ…PLEV), and 483 to 523 (GHSM…KPLN).

As to quaternary structure, interacts with RANBPM.

The protein localises to the cytoplasm. In Arabidopsis thaliana (Mouse-ear cress), this protein is WD repeat-containing protein WDS homolog.